A 282-amino-acid chain; its full sequence is Elongation factor Ts (282 aa).

The segment at 80–83 (TDFV) is involved in Mg(2+) ion dislocation from EF-Tu.

The protein belongs to the EF-Ts family.

Its subcellular location is the cytoplasm. Associates with the EF-Tu.GDP complex and induces the exchange of GDP to GTP. It remains bound to the aminoacyl-tRNA.EF-Tu.GTP complex up to the GTP hydrolysis stage on the ribosome. The protein is Elongation factor Ts (tsf) of Chlamydia pneumoniae (Chlamydophila pneumoniae).